Here is a 110-residue protein sequence, read N- to C-terminus: UPF0145 protein (110 aa).

This sequence belongs to the UPF0145 family.

This is UPF0145 protein from Listeria ivanovii.